The sequence spans 1210 residues: MHPKRSSQGDGSVTKPVRTSDRLRRRPKLHGRSYLYYSSPNMLHNRKRNTKTRTAASQIAKMLHKGNRPARASNAAPIASDLRRSTRKRRISVNLEDYTDSSGAEDEDMMSPAYRTLRRRVHKNFSTSKSRKDMDAELAPRREGLRPRRSTTIANKRLKTESGADQDTSEEKDGQDETENGNELDDADDGENEVEAEDEGNGEDEGDGEDEGEEDGDDDEEGDEEQEGRKRYDLRNRAEVRRMPTGEINKQQQPRSPRRVLHQGMGTRVGRDGRRGGSRPHKRHRFTRTDDSDDSLLVDELDQGPAIPWARGGNRSGAPWLFGGLDTYGSSSLGLNVGASGWGHQSDGLAALTSGVQTAGPSSKGGADIQPLQINEDINFDDIGGLSEYINDLKEMVFFPLLYPEFFASYSITPPRGVLLCGPPGTGKTLIARALACAASKAGQKVSFYMRKGADVLSKWVGEAERQLKLLFEEAQRNQPSIIFFDEIDGLAPVRSSKQEQIHNSIVSTLLALMDGLDSRGQVVLIGATNRVDAIDGALRRPGRFDREFNFSLPGCEARAEILDIHTRKWKHPPTRELKEELAATCVGYCGADLKALCTEAAIRAFREKYPQVYTSDDKYAIDVGLVNVEKSHFVEAMSAITPAAHRGSVVQSRPLSPVVLPCLHRHLLESMSLISDIFPSSATSSELTKLSILTFGSAIPLVYRPRLLLLGGEGVGLDHLGPAILHELEKFPIHSLGLPSLLSDPGAKTPEEALVHIFSEARRTTPSILYIPMFNNWWENAHEQLRAVFLTLLEELPSNLPILLLATSYGELSDMEEQSVFDNRSVYTVDKPSSEDRSLFFDRLIEAALSVISGLNGKPDGPQPLPELPKVPKEPTGPKPAEVKAKVEAEQHALRRLRMCLRDVCNRILYDKRFSAFHFPVTDEDAPNYRSIIQIPMDTATLLQRVDTGQYLTCTPFLQDVDLIVRNAKAYNGDDYAGARIVSRAYELRDVVHGMLSQMDPALLTYCDKIAAEGGPSLIPDDLSGSILGLAPVVQMGTVTRTSARLRNVQPEVNLDRDYEGLKKPKKTTDAVSIDSAADKSQNQDSGQEMPSPDAANPQSAAPSPTDGDREDQSEPPSKEASAEDMSGDSCKGPAAKSDKEISSRTESVKGVFMERTDNYSIPQMERLYTRIMKGVLETLDKGLRDDDNNPKHSILRFLSEFAQHQANF.

Polar residues predominate over residues Met1 to Gly11. 2 disordered regions span residues Met1–Arg32 and Leu63–Asp291. Acidic residues predominate over residues Asp97–Met109. Residues Ser130 to Arg146 show a composition bias toward basic and acidic residues. Over residues Asp167–Gln226 the composition is skewed to acidic residues. Over residues Glu227–Pro244 the composition is skewed to basic and acidic residues. Over residues Gly276–Phe286 the composition is skewed to basic residues. Gly422 to Thr429 is a binding site for ATP. The tract at residues Leu856 to Glu883 is disordered. Positions Arg897–Met1000 constitute a Bromo domain. Residues Asp1057–Thr1070 show a composition bias toward basic and acidic residues. The segment at Asp1057 to Lys1151 is disordered. Residues Asp1080–Glu1090 show a composition bias toward polar residues. Basic and acidic residues-rich tracts occupy residues Asp1108 to Ser1123 and Lys1138 to Lys1151.

This sequence belongs to the AAA ATPase family.

The polypeptide is ATPase family AAA domain-containing protein At1g05910 (Arabidopsis thaliana (Mouse-ear cress)).